Here is a 422-residue protein sequence, read N- to C-terminus: MSVTVVLGAQWGDEGKGKLADILAHESQICCRAQGGNNAGHTIVANGVTYDFHILPSGLVNPGCINVIGSGCVVHVPSFFKELEALEKHGLKTDGRIFISDRAHVVFDVHQMVDGLEEVELAGGFIGTTGKGIGPTYSTKMTRSGLRMCDLFDEKIFEAKLRRIAMGYQKRFGDLLKYDVDDEIARYKDLRGKLAPYVVDQIPLLASAKEKNAKILVEGANALMLDIDYGTYPFVTSSNTGLGGVITGLNLGWRSLREVIGVVKAYTTRVGSGPFPTEQLNEIGEKMQSVGHEVGVTTGRKRRCGWLDLVVVKHSHACNDYTAINLTKLDILDDFDELKVATSYSYNGETLEGFPANPEILAQVEVQYDTLPGWKKPTTGVTNYYDLASQARSYIEYIEKFVGVKVKWIGVGPARDHMITRS.

GTP is bound by residues 12-18 (GDEGKGK) and 40-42 (GHT). Asp-13 functions as the Proton acceptor in the catalytic mechanism. Positions 13 and 40 each coordinate Mg(2+). IMP-binding positions include 13-16 (DEGK), 38-41 (NAGH), Thr-129, Arg-143, Asn-221, Thr-236, and Arg-300. Catalysis depends on His-41, which acts as the Proton donor. 296–302 (VTTGRKR) serves as a coordination point for substrate. Residues Arg-302, 328–330 (KLD), and 410–412 (GVG) contribute to the GTP site.

The protein belongs to the adenylosuccinate synthetase family. Homodimer. The cofactor is Mg(2+).

Its subcellular location is the cytoplasm. It carries out the reaction IMP + L-aspartate + GTP = N(6)-(1,2-dicarboxyethyl)-AMP + GDP + phosphate + 2 H(+). It functions in the pathway purine metabolism; AMP biosynthesis via de novo pathway; AMP from IMP: step 1/2. Plays an important role in the de novo pathway and in the salvage pathway of purine nucleotide biosynthesis. Catalyzes the first committed step in the biosynthesis of AMP from IMP. The sequence is that of Adenylosuccinate synthetase from Pyrenophora tritici-repentis (strain Pt-1C-BFP) (Wheat tan spot fungus).